The chain runs to 241 residues: Protein McbE (241 aa).

The next 6 helical transmembrane spans lie at threonine 17–leucine 35, isoleucine 54–leucine 72, leucine 105–phenylalanine 123, isoleucine 131–leucine 149, serine 163–leucine 181, and leucine 212–leucine 230.

The protein resides in the cell membrane. Functionally, together with two further proteins McbF and McbG this protein causes immunity to the peptide antibiotic microcin B17 (MccB17), which inhibits DNA replication in enterobacteriaceae. Immunity is determined by two different mechanisms. McbE is involved in the production of extracellular MccB17 and, in a complex with McbF it also serves as 'pump' for the export of active MccB17 from the cytoplasm to the periplasmic space. This chain is Protein McbE (mcbE), found in Escherichia coli.